The primary structure comprises 882 residues: MNASAKFTTSQIRSDFLEFFKGKGHTIVPSAPLVPGNDPTLLFTNSGMVQFKDVFLGAEKRSYVRAADVQRCLRAGGKHNDLDQVGYTARHHTFFEMLGNWSFGDYFKKDAIAWAWELLTQVWKLPAERLLVTVYQTDDEAYALWRDMVGVPEERIVRIGDNKGAPFASDNFWQMADTGPCGPCTEIFYDHGDHIAGGPPGSPDEDGDRFIEIWNLVFMQFDRQPDGTLVPLPAPCVDTGMGLERLAAILQHVHTNYEIDLFQALIRKASELTGTADLENKSLRVIADHIRACSFLIVDGVLPSNEGRGYVLRRIIRRALRHGWMLGVRQPFFSKLVPTLVEQMGEAYPELPAAVDTVTRALQAEEERFAETLDAGMKIFEDVAGKASNGVIPGVDAFRLYDTYGFPLDLTQDIARERDLTVDIAGFDAAMEQQRETARAAGKFGGGVTLPAELVATLSPTLFLGYDRLQADGLTVLALLKDGRPVQSADAGDAVIVITNQTPFYAESGGQVGDTGVLTGNGVRLAVDDTQKFAGQFHGHVGTLSEGGLKVGDVLSGQVDGERRGATILNHSATHLLHAALREVLGSHVQQKGSLVAPDRLRFDFSHFQPISAEELAVIERKVNQQVRANNAAEVHNMGMQEALDFGAMALFGEKYGEHVRVLKMGDYSTELCGGTHVNRTGDIGLFKITSEGGVSAGVRRIEAVTGQGALDYVDAEEARLAEAAELLGGSAADVVEKIRALGQRQKQLERELEAVKAKVAAGATADLSGQAVEVAGVKVLAARLEGFDAKALRDAMDRLKQQLGDAVIVLAGAQDGKAALVAGVNGSAMGKVKAGELLSHIASQIGGKGGGRPDLAQGGGEDGPALATALAAVVEWVSPRL.

4 residues coordinate Zn(2+): histidine 571, histidine 575, cysteine 673, and histidine 677.

The protein belongs to the class-II aminoacyl-tRNA synthetase family. Requires Zn(2+) as cofactor.

The protein resides in the cytoplasm. The enzyme catalyses tRNA(Ala) + L-alanine + ATP = L-alanyl-tRNA(Ala) + AMP + diphosphate. Its function is as follows. Catalyzes the attachment of alanine to tRNA(Ala) in a two-step reaction: alanine is first activated by ATP to form Ala-AMP and then transferred to the acceptor end of tRNA(Ala). Also edits incorrectly charged Ser-tRNA(Ala) and Gly-tRNA(Ala) via its editing domain. The chain is Alanine--tRNA ligase from Stenotrophomonas maltophilia (strain K279a).